The sequence spans 286 residues: ATP synthase gamma chain (286 aa).

It belongs to the ATPase gamma chain family. In terms of assembly, F-type ATPases have 2 components, CF(1) - the catalytic core - and CF(0) - the membrane proton channel. CF(1) has five subunits: alpha(3), beta(3), gamma(1), delta(1), epsilon(1). CF(0) has three main subunits: a, b and c.

It is found in the cell membrane. Functionally, produces ATP from ADP in the presence of a proton gradient across the membrane. The gamma chain is believed to be important in regulating ATPase activity and the flow of protons through the CF(0) complex. This is ATP synthase gamma chain from Bacillus cereus (strain G9842).